Consider the following 114-residue polypeptide: Cytochrome c oxidase subunit 7A2-like, mitochondrial (114 aa).

The transit peptide at 1 to 55 (MYYKFSGFTQKLAGAWASEAYSPQGLKPVVSTEAPPIIFATPTKLTSDSTVYDYA) directs the protein to the mitochondrion. Lys-69 carries the post-translational modification N6-acetyllysine. A helical membrane pass occupies residues 82–107 (PDQMLYRTTMALTVGGTIYCLIALYM).

It belongs to the cytochrome c oxidase VIIa family. Interacts with the mitochondrial respiratory complexes III (CIII) and IV (CIV), promoting their association.

It localises to the mitochondrion inner membrane. In terms of biological role, assembly factor that mediates the formation of some mitochondrial respiratory supercomplexes (respirasomes), thereby promoting oxidative phosphorylation and energy metabolism. Acts as a molecular adapter that associates with both mitochondrial respiratory complexes III (CIII) and IV (CIV), promoting their association. Mediates the formation of various mitochondrial respiratory supercomplexes, such as MCIII(2)IV(2), composed of two CIII and two CIV, and the CS-respirasome (MCI(1)III(2)IV(2)), composed of one CI, two CIII and two CIV. Not involved in the formation of the canonical respirasome (MCI(1)III(2)IV(1)), composed of one CI, two CIII and one CIV. The formation of different respirasomes is important for cell adaptation to oxygen conditions and prevent metabolic exhaustion: supercomplexes mediated by COX7A2L/SCAF1 are required to maintain oxidative phosphorylation upon low oxygen conditions and promote metabolic rewiring toward glycolysis. The protein is Cytochrome c oxidase subunit 7A2-like, mitochondrial of Homo sapiens (Human).